The primary structure comprises 188 residues: Tetratricopeptide repeat protein 36 (188 aa).

TPR repeat units lie at residues 50 to 83 (SKALELQAVIAAEAGDLSTALERFGQAINLLPER), 85 to 117 (SAYNNRAQARRLQGDVAGALEDLERALALSGGR), and 122 to 155 (RQGFVQRGLVARLQGRDDDARRDFERAARLGSPF).

It belongs to the TTC36 family.

In Bos taurus (Bovine), this protein is Tetratricopeptide repeat protein 36 (TTC36).